A 29-amino-acid chain; its full sequence is U-homostoxin-Hdu1a (29 aa).

Threonine 1 carries O-linked (GlcNAc...) threonine glycosylation. Disulfide bonds link cysteine 7–cysteine 19 and cysteine 10–cysteine 25.

It belongs to the sea anemone BBH family.

It is found in the secreted. The protein resides in the nematocyst. The chain is U-homostoxin-Hdu1a from Homostichanthus duerdeni (Sea anemone).